An 835-amino-acid chain; its full sequence is Protein translocase subunit SecA 1 (835 aa).

ATP is bound by residues Gln85, 103–107 (GEGKT), and Asp492. The tract at residues 788-807 (VQGEAVHPSSDGEEAKKKPV) is disordered. Zn(2+) contacts are provided by Cys819, Cys821, Cys830, and Cys831.

The protein belongs to the SecA family. As to quaternary structure, monomer and homodimer. Part of the essential Sec protein translocation apparatus which comprises SecA, SecYEG and auxiliary proteins SecDF. Other proteins may also be involved. Zn(2+) is required as a cofactor.

It localises to the cell membrane. The protein localises to the cytoplasm. The enzyme catalyses ATP + H2O + cellular proteinSide 1 = ADP + phosphate + cellular proteinSide 2.. Part of the Sec protein translocase complex. Interacts with the SecYEG preprotein conducting channel. Has a central role in coupling the hydrolysis of ATP to the transfer of proteins into and across the cell membrane, serving as an ATP-driven molecular motor driving the stepwise translocation of polypeptide chains across the membrane. This chain is Protein translocase subunit SecA 1, found in Bacillus anthracis.